We begin with the raw amino-acid sequence, 232 residues long: Large ribosomal subunit protein uL1 (232 aa).

This sequence belongs to the universal ribosomal protein uL1 family. As to quaternary structure, part of the 50S ribosomal subunit.

Its function is as follows. Binds directly to 23S rRNA. The L1 stalk is quite mobile in the ribosome, and is involved in E site tRNA release. Functionally, protein L1 is also a translational repressor protein, it controls the translation of the L11 operon by binding to its mRNA. In Coxiella burnetii (strain RSA 331 / Henzerling II), this protein is Large ribosomal subunit protein uL1.